The sequence spans 316 residues: UDP-N-acetylenolpyruvoylglucosamine reductase (316 aa).

The FAD-binding PCMH-type domain occupies 27–225; it reads VGGKAERFYR…KTAINALLKK (199 aa). Arginine 190 is an active-site residue. Serine 239 acts as the Proton donor in catalysis. Residue glutamate 309 is part of the active site.

Belongs to the MurB family. FAD serves as cofactor.

The protein resides in the cytoplasm. The catalysed reaction is UDP-N-acetyl-alpha-D-muramate + NADP(+) = UDP-N-acetyl-3-O-(1-carboxyvinyl)-alpha-D-glucosamine + NADPH + H(+). The protein operates within cell wall biogenesis; peptidoglycan biosynthesis. In terms of biological role, cell wall formation. The polypeptide is UDP-N-acetylenolpyruvoylglucosamine reductase (Coxiella burnetii (strain RSA 331 / Henzerling II)).